A 298-amino-acid chain; its full sequence is Putative ankyrin repeat-containing protein TP_0502 (298 aa).

4 ANK repeats span residues Cys143–Leu172, Arg176–Gln205, Arg210–Val239, and Asn243–Leu272.

This Treponema pallidum (strain Nichols) protein is Putative ankyrin repeat-containing protein TP_0502.